The primary structure comprises 238 residues: Cysteine-rich venom protein (238 aa).

The signal sequence occupies residues 1–19 (MIAFIVLLSLAAVLQQSSG). Positions 20-27 (TVDFASES) are excised as a propeptide. One can recognise an SCP domain in the interval 39-164 (KKHNALRRSV…PTKYLYVCQY (126 aa)). 8 cysteine pairs are disulfide-bonded: Cys75–Cys153, Cys92–Cys165, Cys148–Cys162, Cys184–Cys191, Cys187–Cys196, Cys200–Cys233, Cys209–Cys227, and Cys218–Cys231. One can recognise a ShKT domain in the interval 200 to 233 (CKREDDYSNCKSLAEKNKCMEEWMKSKCPASCFC).

Belongs to the CRISP family. As to expression, expressed by the venom gland.

Its subcellular location is the secreted. Blocks olfactory (CNGA2) and retinal (CNGA1) cyclic nucleotide-gated (CNG) ion channel currents. Does not inhibit retinal (CNGA3) currents. It forms high-affinity contacts with the pore turret region and most likely inhibits CNG channel current by blocking the external entrance to the transmembrane pore. Does not affect neither depolarization- nor caffeine-induced contraction arterial smooth muscle. The polypeptide is Cysteine-rich venom protein (Demansia vestigiata (Lesser black whip snake)).